A 362-amino-acid chain; its full sequence is METEGLSPMLYEDDYYYGNETGLQPCDETDWDFSYSLLPVFYMIVFVLGLSGNGVVIFTVWKSKPKRRSADTYIGNLALADLAFVVTLPLWATYTALGFHWPFGSALCKLSSYLVLLNMFASVFCLTCLSFDRYLAIVHSLSSAKLRSRSSIIVSLAVIWLFSGLLALPSLILRDTRVEGNNTICDLDFSGVSSKENENFWIGGLSILTTVPGFLLPLLLMTIFYCFIGGKVTMHFQNLKKEEQKKKRLLKIIITLVVVFAICWLPFHILKTIHFLDLMGFLELSCSTQNIIVSLHPYATCLAYVNSCLNPFLYAFFDLRFRSQCFFFFGFKKVLQGHLSNTSSSLSAQTQKSEIHSLATKV.

Residues 1 to 37 lie on the Extracellular side of the membrane; the sequence is METEGLSPMLYEDDYYYGNETGLQPCDETDWDFSYSL. Asparagine 19 carries N-linked (GlcNAc...) asparagine glycosylation. 2 disulfides stabilise this stretch: cysteine 26/cysteine 286 and cysteine 108/cysteine 185. A helical transmembrane segment spans residues 38–58; the sequence is LPVFYMIVFVLGLSGNGVVIF. Topologically, residues 59–76 are cytoplasmic; it reads TVWKSKPKRRSADTYIGN. A helical membrane pass occupies residues 77 to 97; it reads LALADLAFVVTLPLWATYTAL. The Extracellular segment spans residues 98–110; the sequence is GFHWPFGSALCKL. A helical transmembrane segment spans residues 111 to 131; sequence SSYLVLLNMFASVFCLTCLSF. Residues 132–151 lie on the Cytoplasmic side of the membrane; sequence DRYLAIVHSLSSAKLRSRSS. Residues 152 to 172 form a helical membrane-spanning segment; that stretch reads IIVSLAVIWLFSGLLALPSLI. The Extracellular segment spans residues 173–199; that stretch reads LRDTRVEGNNTICDLDFSGVSSKENEN. Residue asparagine 181 is glycosylated (N-linked (GlcNAc...) asparagine). The chain crosses the membrane as a helical span at residues 200 to 220; that stretch reads FWIGGLSILTTVPGFLLPLLL. The Cytoplasmic segment spans residues 221-248; that stretch reads MTIFYCFIGGKVTMHFQNLKKEEQKKKR. A helical membrane pass occupies residues 249 to 269; the sequence is LLKIIITLVVVFAICWLPFHI. Residues 270-296 lie on the Extracellular side of the membrane; the sequence is LKTIHFLDLMGFLELSCSTQNIIVSLH. The chain crosses the membrane as a helical span at residues 297–317; sequence PYATCLAYVNSCLNPFLYAFF. Residues 318 to 362 lie on the Cytoplasmic side of the membrane; the sequence is DLRFRSQCFFFFGFKKVLQGHLSNTSSSLSAQTQKSEIHSLATKV.

Belongs to the G-protein coupled receptor 1 family. In terms of tissue distribution, expressed in all blood vessels including the posterior cardinal vein, intersomitic veins and the vitelline vein network. At the gastrula stage, exclusively expressed in the mesodermal layer and at the neurula stage in the lateral plate mesoderm. Larval expression is observed in the endothelium of the primary blood vessels and the forming heart.

The protein localises to the cell membrane. In terms of biological role, g protein-coupled receptor for peptide hormones apelin (apln) and apelin receptor early endogenous ligand (apela), that plays a role in the regulation of normal cardiovascular function and fluid homeostasis. When acting as apelin receptor, activates both G(i) protein pathway that inhibits adenylate cyclase activity, and the beta-arrestin pathway that promotes internalization of the receptor. Also functions as mechanoreceptor that is activated by pathological stimuli in a G-protein-independent fashion to induce beta-arrestin signaling, hence eliciting cardiac hypertrophy. However, the presence of apelin ligand blunts cardiac hypertrophic induction from APLNR/APJ on response to pathological stimuli. Plays a key role in early development such as gastrulation, blood vessels formation and heart morphogenesis by acting as a receptor for apela hormone, promoting endoderm and mesendoderm cell migration and regulating the migration of cells fated to become myocardial progenitors, respectively. Promotes angioblast migration toward the embryonic midline, i.e. the position of the future vessel formation, during vasculogenesis. May promote sinus venosus (SV)-derived endothelial cells migration into the developing heart to promote coronary blood vessel development. Required for cardiovascular development, particularly for intersomitic vein angiogenesis by acting as a receptor for apln hormone. Also plays a role in various processes in adults such as regulation of blood vessel formation, blood pressure, heart contractility, and heart failure. Acts upstream of the i/o type of G-alpha proteins in the differentiation of endothelium, erythroid cells, myeloid cells and cardiomyocytes. This Xenopus laevis (African clawed frog) protein is Apelin receptor A (aplnr-a).